The sequence spans 149 residues: HTH-type transcriptional regulator LrpB (149 aa).

In terms of domain architecture, HTH asnC-type spans 3–64; that stretch reads IDSIDFQILQ…VVDELKMGFS (62 aa). Positions 22–41 form a DNA-binding region, H-T-H motif; that stretch reads WKEIGEKIHMTGQAVGNRIK.

Negative regulation of glyA transcription and kinB-dependent sporulation. This chain is HTH-type transcriptional regulator LrpB (lrpB), found in Bacillus subtilis (strain 168).